The primary structure comprises 685 residues: Protein argonaute (685 aa).

Positions 1–99 (MNHLGKTEVF…LYPKGRRPLD (99 aa)) are N-terminal domain. Positions 100-176 (PKDPGERSVL…VDPAYRILCE (77 aa)) are linker L1. One can recognise a PAZ domain in the interval 169-265 (PAYRILCEMS…HLTGLLVPVL (97 aa)). A linker L2 region spans residues 272 to 337 (EEEGSLALSL…SKPADALRVG (66 aa)). The segment at 338 to 463 (FYRAQETALA…LLAKAGLQVV (126 aa)) is mid domain. The PIWI domain stretch occupies residues 464-685 (ALSGAYPAEL…EVDREKLFFV (222 aa)). Active-site residues include aspartate 478, glutamate 512, aspartate 546, and aspartate 660. Aspartate 478 is a Mn(2+) binding site. Residues 507–671 (EAQAGERIPQ…LVKEVGRLGI (165 aa)) form the Piwi domain. Mn(2+) contacts are provided by aspartate 546, aspartate 660, and valine 685.

This sequence belongs to the argonaute family. Long pAgo subfamily. Coimmunoprecipitates with a number of proteins involved in DNA replication or recombination including RepA (initiates replication), AddA/B (TT_C0638 and TT_C0639), ArgR, GyrA/B, HU (TT_C0984), PriA, Rad52 (TT_C1923), RecJ, SSB, TopA and UvrB. Most proteins remain associated with TtAgo after DNase treatment and associate with catalytically inactive protein. Requires Mn(2+) as cofactor.

Functionally, a DNA-guided ssDNA endonuclease. Uses short ssDNA sequences as guides (gDNA, also called small interfering DNA, siDNA) to bind complementary DNA target strands, resulting in cleavage of the target DNA (tDNA). The cleavage site is 10 nucleotides (nt) downstream of the target residue base-paired with the 5'-end of the gDNA. Plays a role in completion of DNA replication, participates in decatenating replicated DNA and plasmid. In situ purifies with 5'-phosphorylated long DNA (about 1160 nt, maps to the whole chromosome and plasmid), 25-35 nt RNAs that map to the whole chromosome and 15-18 nt DNA that maps to the replication terminus region (ter) on the chromosome and plasmid. Most short DNA starts with dC. Has been shown to have guide sequence-independent dsDNase activity called 'chopping', which requires unstable DNA (high AT-content, multiple mismatches or low salt conditions), and could be used to generate gDNA. Preferentially binds tDNA with dC at its 3'-terminus. Has also been shown to have no detectable guide sequence-independent dsDNase activity. The latter study proposes TtAgo may acquire gDNA from nicked dsDNA, by binding to 5'-phosphorylated-dC nicks, then cleaving 10 nt away on the opposite strand; subsequently an exonuclease (maybe AddA-AddB helicase/nuclease) trims the ends to generate the gDNA. In terms of biological role, involved in defense against invading mobile genetic elements. TtAgo interferes with plasmid DNA, stimulates expression of specific endogenous genes, including various CRISPR loci and at least part of the CRISPR adaptation machinery, but only when exogenous plasmid DNA is present. Upon purification from E.coli associates with gDNA 13-25 nt long with 5'-phosphorylated ends and with 10-150 nt RNA with 5'-OH. DNA corresponds to the expression plasmid rather than chromosomal DNA; 89% of gDNA starts with dC and 72% has dA in the second position. Endonucleolytically cleaves tDNA with 5'-phosphorylated gDNA but not 5'-phosphorylated gRNA; the active site is involved in processing or binding of ssDNA. Nicks or linearizes supercoiled plasmid target when it has the appropriate gDNA sequences, does not cleave linear tDNA. Positions 4 to 16 of the tDNA need to be base paired to the gDNA for efficient tDNA cleavage. Although the system can support single nucleotide insertions in either the gDNA or tDNA, in all cases cleavage activity is reduced, with a wide range of sequence- and position-specific effects. Its function is as follows. First characterized as a DNA-guided RNA endonuclease. Uses gDNA to bind complementary RNA target strands, resulting in cleavage of the target RNA. The cleavage site is 10 nucleotides (nt) downstream of the target residue base-paired with the 5'-end of the guide DNA. The polypeptide is Protein argonaute (Thermus thermophilus (strain ATCC BAA-163 / DSM 7039 / HB27)).